The sequence spans 202 residues: Peptide deformylase (202 aa).

The disordered stretch occupies residues M1–E24. C121 and H163 together coordinate Fe cation. E164 is a catalytic residue. H167 is a Fe cation binding site.

Belongs to the polypeptide deformylase family. Fe(2+) serves as cofactor.

It carries out the reaction N-terminal N-formyl-L-methionyl-[peptide] + H2O = N-terminal L-methionyl-[peptide] + formate. Its function is as follows. Removes the formyl group from the N-terminal Met of newly synthesized proteins. Requires at least a dipeptide for an efficient rate of reaction. N-terminal L-methionine is a prerequisite for activity but the enzyme has broad specificity at other positions. This chain is Peptide deformylase, found in Prochlorococcus marinus (strain NATL2A).